Reading from the N-terminus, the 575-residue chain is E3 ubiquitin-protein ligase IpaH1.4 (575 aa).

The segment at 1-270 (MIKSTNIQAI…PDYSGPQIFF (270 aa)) is interaction with target proteins. LRR repeat units follow at residues 69–90 (LQNQ…PDLP), 91–115 (PQIT…MLKV), 117–130 (HAQF…PALP), 131–150 (ETLE…PFLP), 151–170 (ENLT…PLLP), 171–195 (PELK…KLEG), 197–209 (ALAN…LPEL), and 210–233 (PFSM…VLRL). Positions 271-281 (SMGNSATISAP) are linker. The interval 282 to 575 (EHSLADAVTA…LSENGSNHIA (294 aa)) is E3 ubiquitin-protein ligase catalytic domain. The 292-residue stretch at 284–575 (SLADAVTAWF…LSENGSNHIA (292 aa)) folds into the NEL domain. The active-site Glycyl thioester intermediate is cysteine 368.

The protein belongs to the LRR-containing bacterial E3 ligase family. As to quaternary structure, interacts with human RBCK1/HOIL-1 and RNF31/HOIP components of the LUBAC complex. In terms of processing, ubiquitinated in the presence of host E1 ubiquitin-activating enzyme, E2 ubiquitin-conjugating enzyme and ubiquitin.

It is found in the secreted. The protein localises to the host cytoplasm. The enzyme catalyses S-ubiquitinyl-[E2 ubiquitin-conjugating enzyme]-L-cysteine + [acceptor protein]-L-lysine = [E2 ubiquitin-conjugating enzyme]-L-cysteine + N(6)-ubiquitinyl-[acceptor protein]-L-lysine.. The protein operates within protein modification; protein ubiquitination. Its activity is regulated as follows. Exists in an autoinhibited state in the absence of substrate protein, probably due to interactions of the leucine-rich repeat domain with the catalytic domain. Is activated upon binding to a substrate protein. In terms of biological role, E3 ubiquitin-protein ligase effector that inhibits host cell innate immunity during bacterial infection by catalyzing 'Lys-48'-linked polyubiquitination and subsequent degradation of host RNF31/HOIP and RBCK1/HOIL-1. Host RNF31/HOIP is the catalytic component of the LUBAC complex, which conjugates linear ('Met-1'-linked) polyubiquitin chains at the surface of bacteria invading the host cytosol to form the ubiquitin coat surrounding bacteria. The bacterial ubiquitin coat acts as an 'eat-me' signal for xenophagy and promotes NF-kappa-B activation. By promoting degradation of host RNF31/HOIP, IpaH1.4 prevents formation of the bacterial ubiquitin coat and activation of host cell innate immunity. The protein is E3 ubiquitin-protein ligase IpaH1.4 of Shigella flexneri.